A 328-amino-acid polypeptide reads, in one-letter code: UPF0194 membrane protein YE2891 (328 aa).

An N-terminal signal peptide occupies residues 1–22 (MNRKKIIVAVVIVALLAAIGYG). Coiled coils occupy residues 80-109 (YVNA…REEE) and 139-208 (ANKA…TTLL).

Belongs to the UPF0194 family.

It is found in the periplasm. This is UPF0194 membrane protein YE2891 from Yersinia enterocolitica serotype O:8 / biotype 1B (strain NCTC 13174 / 8081).